The primary structure comprises 283 residues: Shikimate kinase (283 aa).

86–96 (PLKSGLSSSSA) is an ATP binding site.

The protein belongs to the GHMP kinase family. Archaeal shikimate kinase subfamily.

The protein resides in the cytoplasm. The catalysed reaction is shikimate + ATP = 3-phosphoshikimate + ADP + H(+). Its pathway is metabolic intermediate biosynthesis; chorismate biosynthesis; chorismate from D-erythrose 4-phosphate and phosphoenolpyruvate: step 5/7. This chain is Shikimate kinase, found in Methanococcus vannielii (strain ATCC 35089 / DSM 1224 / JCM 13029 / OCM 148 / SB).